The chain runs to 151 residues: UPF0178 protein Desal_2673 (151 aa).

This sequence belongs to the UPF0178 family.

In Maridesulfovibrio salexigens (strain ATCC 14822 / DSM 2638 / NCIMB 8403 / VKM B-1763) (Desulfovibrio salexigens), this protein is UPF0178 protein Desal_2673.